The chain runs to 232 residues: Ubiquinone biosynthesis O-methyltransferase (232 aa).

S-adenosyl-L-methionine contacts are provided by R36, G55, D76, and M120.

Belongs to the methyltransferase superfamily. UbiG/COQ3 family.

It carries out the reaction a 3-demethylubiquinol + S-adenosyl-L-methionine = a ubiquinol + S-adenosyl-L-homocysteine + H(+). It catalyses the reaction a 3-(all-trans-polyprenyl)benzene-1,2-diol + S-adenosyl-L-methionine = a 2-methoxy-6-(all-trans-polyprenyl)phenol + S-adenosyl-L-homocysteine + H(+). The protein operates within cofactor biosynthesis; ubiquinone biosynthesis. Functionally, O-methyltransferase that catalyzes the 2 O-methylation steps in the ubiquinone biosynthetic pathway. This is Ubiquinone biosynthesis O-methyltransferase from Burkholderia multivorans (strain ATCC 17616 / 249).